A 453-amino-acid chain; its full sequence is MSFDLIIKNGTVILENEARVVDVAVKGGKIAAIGQDLGDAKEVMDASGLVVSPGMVDAHTHISEPGRSHWEGYETGTRAAAKGGITTMIEMPLNQLPATVDRASIELKFDAAKGKLTIDAAQLGGLVSYNIDRLHELDEVGVVGFKCFVATCGDRGIDNDFRDVNDWQFFKGAQKLGELGQPVLVHCENALICDELGEEAKREGRVTAHDYVASRPVFTEVEAIRRVLYLAKVAGCRLHVCHISSPEGVEEVTRARQEGQDVTCESCPHYFVLDTDQFEEIGTLAKCSPPIRDLENQKGMWEKLFNGEIDCLVSDHSPCPPEMKAGNIMKAWGGIAGLQSCMDVMFDEAVQKRGMSLPMFGKLMATNAADIFGLQQKGRIAPGKDADFVFIQPNSSYVLTNDDLEYRHKVSPYVGRTIGARITKTILRGDVIYDIEQGFPVAPKGQFILKHQQ.

Zn(2+) contacts are provided by H59, H61, K146, H186, H242, and D315. K146 carries the N6-carboxylysine modification.

The protein belongs to the metallo-dependent hydrolases superfamily. Allantoinase family. As to quaternary structure, homotetramer. Zn(2+) serves as cofactor. Carboxylation allows a single lysine to coordinate two zinc ions.

It catalyses the reaction (S)-allantoin + H2O = allantoate + H(+). The protein operates within nitrogen metabolism; (S)-allantoin degradation; allantoate from (S)-allantoin: step 1/1. In terms of biological role, catalyzes the conversion of allantoin (5-ureidohydantoin) to allantoic acid by hydrolytic cleavage of the five-member hydantoin ring. The sequence is that of Allantoinase from Escherichia coli (strain SMS-3-5 / SECEC).